We begin with the raw amino-acid sequence, 927 residues long: Phosphoenolpyruvate carboxylase (927 aa).

Active-site residues include histidine 160 and lysine 589.

This sequence belongs to the PEPCase type 1 family. Mg(2+) is required as a cofactor.

The enzyme catalyses oxaloacetate + phosphate = phosphoenolpyruvate + hydrogencarbonate. Its function is as follows. Forms oxaloacetate, a four-carbon dicarboxylic acid source for the tricarboxylic acid cycle. This Rhodopseudomonas palustris (strain BisA53) protein is Phosphoenolpyruvate carboxylase.